Here is a 1150-residue protein sequence, read N- to C-terminus: ATP-dependent helicase/deoxyribonuclease subunit B (1150 aa).

8–15 (GRSGSGKS) contacts ATP. [4Fe-4S] cluster-binding residues include Cys-789, Cys-1108, Cys-1111, and Cys-1117.

This sequence belongs to the helicase family. AddB/RexB type 1 subfamily. In terms of assembly, heterodimer of AddA and AddB. Requires Mg(2+) as cofactor. It depends on [4Fe-4S] cluster as a cofactor.

In terms of biological role, the heterodimer acts as both an ATP-dependent DNA helicase and an ATP-dependent, dual-direction single-stranded exonuclease. Recognizes the chi site generating a DNA molecule suitable for the initiation of homologous recombination. The AddB subunit has 5' -&gt; 3' nuclease activity but not helicase activity. This chain is ATP-dependent helicase/deoxyribonuclease subunit B, found in Clostridium tetani (strain Massachusetts / E88).